The sequence spans 419 residues: L-rhamnose isomerase (419 aa).

Mn(2+)-binding residues include H262, D294, and D296.

The protein belongs to the rhamnose isomerase family. Homotetramer. Mn(2+) serves as cofactor.

It is found in the cytoplasm. The catalysed reaction is L-rhamnopyranose = L-rhamnulose. It functions in the pathway carbohydrate degradation; L-rhamnose degradation; glycerone phosphate from L-rhamnose: step 1/3. In terms of biological role, catalyzes the interconversion of L-rhamnose and L-rhamnulose. This is L-rhamnose isomerase from Salmonella agona (strain SL483).